Reading from the N-terminus, the 1767-residue chain is Trans-Golgi network-localized SYP41-interacting protein 1 (1767 aa).

The disordered stretch occupies residues Met-1–Asp-72. Residues Met-1–Arg-1748 are Cytoplasmic-facing. The segment covering Ile-16–Pro-32 has biased composition (acidic residues). 5 coiled-coil regions span residues Leu-276–Ala-436, Val-493–Leu-516, Lys-570–Thr-590, Val-684–Ser-805, and Ile-845–Lys-1082. The span at Asp-1177–Ser-1190 shows a compositional bias: polar residues. The disordered stretch occupies residues Asp-1177 to Ser-1198. 4 coiled-coil regions span residues Asn-1251 to Asn-1310, Ile-1362 to Lys-1424, Leu-1522 to Glu-1542, and Leu-1603 to Gln-1630. A helical; Anchor for type IV membrane protein membrane pass occupies residues Leu-1749–Ile-1766. Leu-1767 is a topological domain (vesicular).

As to quaternary structure, interacts with SYP41. As to expression, expressed ubiquitously in roots, leaves and flowers, and, to a lower extent, in stems.

It is found in the golgi apparatus. The protein localises to the trans-Golgi network membrane. In terms of biological role, tethering factor involved in vesicle fusion at the trans-Golgi network (TGN) thus being required for efficient protein trafficking to the vacuole. Implicated in resistance to salt and osmotic stresses. Modulates the cell morphology (e.g. epidermal cell file rotation (CFR) and cell expansion) in mature regions of roots and the base of hypocotyls as well as root skewing, a process leading to root movement within the soil in order to maximize anchorage and nutrient acquisition, probably by regulating microtubule stabilization independently of their orientation. The sequence is that of Trans-Golgi network-localized SYP41-interacting protein 1 from Arabidopsis thaliana (Mouse-ear cress).